The chain runs to 305 residues: Acetyl-coenzyme A carboxylase carboxyl transferase subunit beta (305 aa).

Positions 27–296 (LWVKCSACRE…PAAKADLAAR (270 aa)) constitute a CoA carboxyltransferase N-terminal domain. 4 residues coordinate Zn(2+): Cys-31, Cys-34, Cys-50, and Cys-53. The segment at 31 to 53 (CSACRELIYKKQLNDNLKVCPKC) adopts a C4-type zinc-finger fold.

It belongs to the AccD/PCCB family. Acetyl-CoA carboxylase is a heterohexamer composed of biotin carboxyl carrier protein (AccB), biotin carboxylase (AccC) and two subunits each of ACCase subunit alpha (AccA) and ACCase subunit beta (AccD). The cofactor is Zn(2+).

The protein resides in the cytoplasm. It catalyses the reaction N(6)-carboxybiotinyl-L-lysyl-[protein] + acetyl-CoA = N(6)-biotinyl-L-lysyl-[protein] + malonyl-CoA. It participates in lipid metabolism; malonyl-CoA biosynthesis; malonyl-CoA from acetyl-CoA: step 1/1. Its function is as follows. Component of the acetyl coenzyme A carboxylase (ACC) complex. Biotin carboxylase (BC) catalyzes the carboxylation of biotin on its carrier protein (BCCP) and then the CO(2) group is transferred by the transcarboxylase to acetyl-CoA to form malonyl-CoA. This chain is Acetyl-coenzyme A carboxylase carboxyl transferase subunit beta, found in Chloroflexus aggregans (strain MD-66 / DSM 9485).